The chain runs to 122 residues: Ribosome-binding factor A (122 aa).

It belongs to the RbfA family. As to quaternary structure, monomer. Binds 30S ribosomal subunits, but not 50S ribosomal subunits or 70S ribosomes.

It is found in the cytoplasm. Functionally, one of several proteins that assist in the late maturation steps of the functional core of the 30S ribosomal subunit. Associates with free 30S ribosomal subunits (but not with 30S subunits that are part of 70S ribosomes or polysomes). Required for efficient processing of 16S rRNA. May interact with the 5'-terminal helix region of 16S rRNA. In Polaromonas sp. (strain JS666 / ATCC BAA-500), this protein is Ribosome-binding factor A.